A 452-amino-acid polypeptide reads, in one-letter code: tRNA modification GTPase MnmE (452 aa).

Arg-23, Glu-81, and Lys-120 together coordinate (6S)-5-formyl-5,6,7,8-tetrahydrofolate. Residues 217-373 (GIKTAIIGQT…LVLRINQMYL (157 aa)) enclose the TrmE-type G domain. Residue Asn-227 coordinates K(+). GTP contacts are provided by residues 227 to 232 (NVGKSS), 246 to 252 (TDIPGTT), and 271 to 274 (DTAG). Ser-231 contributes to the Mg(2+) binding site. Positions 246, 248, and 251 each coordinate K(+). Thr-252 contributes to the Mg(2+) binding site. Lys-452 contacts (6S)-5-formyl-5,6,7,8-tetrahydrofolate.

Belongs to the TRAFAC class TrmE-Era-EngA-EngB-Septin-like GTPase superfamily. TrmE GTPase family. As to quaternary structure, homodimer. Heterotetramer of two MnmE and two MnmG subunits. It depends on K(+) as a cofactor.

It localises to the cytoplasm. Functionally, exhibits a very high intrinsic GTPase hydrolysis rate. Involved in the addition of a carboxymethylaminomethyl (cmnm) group at the wobble position (U34) of certain tRNAs, forming tRNA-cmnm(5)s(2)U34. This is tRNA modification GTPase MnmE from Mycoplasma mycoides subsp. mycoides SC (strain CCUG 32753 / NCTC 10114 / PG1).